We begin with the raw amino-acid sequence, 549 residues long: Endoplasmic reticulum mannosyl-oligosaccharide 1,2-alpha-mannosidase (549 aa).

Topologically, residues 1 to 4 (MKNS) are cytoplasmic. Residues 5 to 24 (VGISIATIVAIIAAIYYVPW) traverse the membrane as a helical; Signal-anchor for type II membrane protein segment. Over 25 to 354 (YEHFERKSPG…LLASGSTEGL (330 aa)) the chain is Lumenal. Residues Asn-96, Asn-155, and Asn-224 are each glycosylated (N-linked (GlcNAc...) asparagine). Cys-340 and Cys-385 are disulfide-bonded. Glu-399 functions as the Proton donor in the catalytic mechanism. The cysteines at positions 468 and 471 are disulfide-linked. Thr-525 is a binding site for Ca(2+).

The protein belongs to the glycosyl hydrolase 47 family. As to quaternary structure, homodimer. It depends on Ca(2+) as a cofactor.

Its subcellular location is the endoplasmic reticulum membrane. It carries out the reaction N(4)-(alpha-D-Man-(1-&gt;2)-alpha-D-Man-(1-&gt;2)-alpha-D-Man-(1-&gt;3)-[alpha-D-Man-(1-&gt;2)-alpha-D-Man-(1-&gt;3)-[alpha-D-Man-(1-&gt;2)-alpha-D-Man-(1-&gt;6)]-alpha-D-Man-(1-&gt;6)]-beta-D-Man-(1-&gt;4)-beta-D-GlcNAc-(1-&gt;4)-beta-D-GlcNAc)-L-asparaginyl-[protein] (N-glucan mannose isomer 9A1,2,3B1,2,3) + 4 H2O = N(4)-(alpha-D-Man-(1-&gt;3)-[alpha-D-Man-(1-&gt;3)-[alpha-D-Man-(1-&gt;6)]-alpha-D-Man-(1-&gt;6)]-beta-D-Man-(1-&gt;4)-beta-D-GlcNAc-(1-&gt;4)-beta-D-GlcNAc)-L-asparaginyl-[protein] (N-glucan mannose isomer 5A1,2) + 4 beta-D-mannose. The enzyme catalyses N(4)-(alpha-D-Man-(1-&gt;2)-alpha-D-Man-(1-&gt;2)-alpha-D-Man-(1-&gt;3)-[alpha-D-Man-(1-&gt;3)-[alpha-D-Man-(1-&gt;2)-alpha-D-Man-(1-&gt;6)]-alpha-D-Man-(1-&gt;6)]-beta-D-Man-(1-&gt;4)-beta-D-GlcNAc-(1-&gt;4)-beta-D-GlcNAc)-L-asparaginyl-[protein] (N-glucan mannose isomer 8A1,2,3B1,3) + 3 H2O = N(4)-(alpha-D-Man-(1-&gt;3)-[alpha-D-Man-(1-&gt;3)-[alpha-D-Man-(1-&gt;6)]-alpha-D-Man-(1-&gt;6)]-beta-D-Man-(1-&gt;4)-beta-D-GlcNAc-(1-&gt;4)-beta-D-GlcNAc)-L-asparaginyl-[protein] (N-glucan mannose isomer 5A1,2) + 3 beta-D-mannose. It functions in the pathway protein modification; protein glycosylation. In terms of biological role, involved in glycoprotein quality control as it is important for the targeting of misfolded glycoproteins for degradation. It primarily trims a single alpha-1,2-linked mannose residue from Man(9)GlcNAc(2) to produce Man(8)GlcNAc(2), but at high enzyme concentrations it further trims the carbohydrates to Man(5)GlcNAc(2). The sequence is that of Endoplasmic reticulum mannosyl-oligosaccharide 1,2-alpha-mannosidase (MNS1) from Saccharomyces cerevisiae (strain ATCC 204508 / S288c) (Baker's yeast).